The following is a 398-amino-acid chain: 4-hydroxy-3-methylbut-2-enyl diphosphate reductase (398 aa).

Position 66 (Cys66) interacts with [4Fe-4S] cluster. Residue His96 participates in (2E)-4-hydroxy-3-methylbut-2-enyl diphosphate binding. Residue His96 participates in dimethylallyl diphosphate binding. His96 lines the isopentenyl diphosphate pocket. Cys157 serves as a coordination point for [4Fe-4S] cluster. Residue His185 participates in (2E)-4-hydroxy-3-methylbut-2-enyl diphosphate binding. His185 provides a ligand contact to dimethylallyl diphosphate. His185 lines the isopentenyl diphosphate pocket. The Proton donor role is filled by Glu187. Thr250 is a (2E)-4-hydroxy-3-methylbut-2-enyl diphosphate binding site. A [4Fe-4S] cluster-binding site is contributed by Cys288. Ser317, Ser318, Asn319, and Ser379 together coordinate (2E)-4-hydroxy-3-methylbut-2-enyl diphosphate. Residues Ser317, Ser318, Asn319, and Ser379 each coordinate dimethylallyl diphosphate. Residues Ser317, Ser318, Asn319, and Ser379 each contribute to the isopentenyl diphosphate site.

Belongs to the IspH family. [4Fe-4S] cluster serves as cofactor.

It catalyses the reaction isopentenyl diphosphate + 2 oxidized [2Fe-2S]-[ferredoxin] + H2O = (2E)-4-hydroxy-3-methylbut-2-enyl diphosphate + 2 reduced [2Fe-2S]-[ferredoxin] + 2 H(+). It carries out the reaction dimethylallyl diphosphate + 2 oxidized [2Fe-2S]-[ferredoxin] + H2O = (2E)-4-hydroxy-3-methylbut-2-enyl diphosphate + 2 reduced [2Fe-2S]-[ferredoxin] + 2 H(+). Its pathway is isoprenoid biosynthesis; dimethylallyl diphosphate biosynthesis; dimethylallyl diphosphate from (2E)-4-hydroxy-3-methylbutenyl diphosphate: step 1/1. It participates in isoprenoid biosynthesis; isopentenyl diphosphate biosynthesis via DXP pathway; isopentenyl diphosphate from 1-deoxy-D-xylulose 5-phosphate: step 6/6. Its function is as follows. Catalyzes the conversion of 1-hydroxy-2-methyl-2-(E)-butenyl 4-diphosphate (HMBPP) into a mixture of isopentenyl diphosphate (IPP) and dimethylallyl diphosphate (DMAPP). Acts in the terminal step of the DOXP/MEP pathway for isoprenoid precursor biosynthesis. This chain is 4-hydroxy-3-methylbut-2-enyl diphosphate reductase, found in Prochlorococcus marinus (strain MIT 9313).